Reading from the N-terminus, the 126-residue chain is Glycine cleavage system H protein (126 aa).

Residues Val-22–Glu-104 form the Lipoyl-binding domain. N6-lipoyllysine is present on Lys-63.

The protein belongs to the GcvH family. As to quaternary structure, the glycine cleavage system is composed of four proteins: P, T, L and H. The cofactor is (R)-lipoate.

The glycine cleavage system catalyzes the degradation of glycine. The H protein shuttles the methylamine group of glycine from the P protein to the T protein. In terms of biological role, is also involved in protein lipoylation via its role as an octanoyl/lipoyl carrier protein intermediate. The polypeptide is Glycine cleavage system H protein (Staphylococcus aureus (strain USA300)).